A 220-amino-acid polypeptide reads, in one-letter code: MDLKQIAGEYAATFVKDGMKIGLGTGSTAYWTIQKLGQRVKEGLSIQAVPTSKETEALAQQLNIPLISLNDVQSLDLTIDGADEIDSNLQLIKGGGGALLREKIVASSSKELIIIIDESKVVTRLGTFPLPIEIIPFAWKQTESKIQSLGCQTTLRLKNNETFITDNNNMIIDCIFPNHIPTPSDLHKRLKMITGVVETGLFVNMTSKAIIGTKNGIQEL.

Residues 25 to 28 (TGST), 80 to 83 (DGAD), and 93 to 96 (KGGG) contribute to the substrate site. Residue Glu-102 is the Proton acceptor of the active site. Lys-120 serves as a coordination point for substrate.

The protein belongs to the ribose 5-phosphate isomerase family. As to quaternary structure, homodimer.

It carries out the reaction aldehydo-D-ribose 5-phosphate = D-ribulose 5-phosphate. Its pathway is carbohydrate degradation; pentose phosphate pathway; D-ribose 5-phosphate from D-ribulose 5-phosphate (non-oxidative stage): step 1/1. Its function is as follows. Catalyzes the reversible conversion of ribose-5-phosphate to ribulose 5-phosphate. The protein is Ribose-5-phosphate isomerase A of Bacillus cereus (strain ZK / E33L).